Here is a 294-residue protein sequence, read N- to C-terminus: Universal stress protein MSMEG_3950/MSMEI_3859 (294 aa).

An ATP-binding site is contributed by G13. K109 participates in a covalent cross-link: Isoglutamyl lysine isopeptide (Lys-Gln) (interchain with Q-Cter in protein Pup). ATP contacts are provided by residues 117–123 (GNRGMGA), 131–132 (ST), G164, D197, 261–267 (GSHGRGG), and 275–277 (SVS).

It belongs to the universal stress protein A family.

The polypeptide is Universal stress protein MSMEG_3950/MSMEI_3859 (Mycolicibacterium smegmatis (strain ATCC 700084 / mc(2)155) (Mycobacterium smegmatis)).